The chain runs to 163 residues: MRLTSKGRYAVTAMLDVALNSEAGPVPLADISERQGISLSYLEQLFSRLRKNGLVSSVRGPGGGYLLGKDAGSIAVGEVISAVDESVDATRCQGKGGCQGGDKCLTHALWRDLSDRLTGFLNNITLGELVNNQEVLDVSDRQHTHDAPRSTRTQDAIDVKLRA.

The HTH rrf2-type domain occupies 2-131; sequence RLTSKGRYAV…NNITLGELVN (130 aa). The H-T-H motif DNA-binding region spans 28 to 51; that stretch reads LADISERQGISLSYLEQLFSRLRK. The [2Fe-2S] cluster site is built by Cys-92, Cys-98, and Cys-104. Positions 140–149 are enriched in basic and acidic residues; it reads DRQHTHDAPR. Residues 140 to 163 form a disordered region; sequence DRQHTHDAPRSTRTQDAIDVKLRA.

[2Fe-2S] cluster is required as a cofactor.

In terms of biological role, regulates the transcription of several operons and genes involved in the biogenesis of Fe-S clusters and Fe-S-containing proteins. This chain is HTH-type transcriptional regulator IscR, found in Citrobacter koseri (strain ATCC BAA-895 / CDC 4225-83 / SGSC4696).